The following is a 276-amino-acid chain: MTSFRLALIQLQISSIKSDNVTRACSFIREAATQGAKIVSLPECFNSPYGAKYFPEYAEKIPGESTQKLSEVAKECSIYLIGGSIPEEDAGKLYNTCAVFGPDGTLLAKYRKIHLFDIDVPGKITFQESKTLSPGDSFSTFDTPYCRVGLGICYDMRFAELAQIYAQRGCQLLVYPGAFNLTTGPAHWELLQRSRAVDNQVYVATASPARDDKASYVAWGHSTVVNPWGEVLAKAGTEEAIVYSDIDLKKLAEIRQQIPVFRQKRSDLYAVEMKKP.

Positions 4–248 constitute a CN hydrolase domain; the sequence is FRLALIQLQI…EAIVYSDIDL (245 aa). Phosphoserine is present on serine 26. Glutamate 43 (proton acceptor) is an active-site residue. Lysine 68 carries the N6-acetyllysine; alternate modification. Lysine 68 carries the post-translational modification N6-succinyllysine; alternate. The Proton donor role is filled by lysine 112. N6-succinyllysine occurs at positions 123 and 130. The active-site Nucleophile is cysteine 153.

In terms of assembly, homodimer. Detected in fetal brain (at protein level). Ubiquitous. Detected in heart, brain, placenta, lung, liver, skeletal muscle, kidney, pancreas, prostate, spleen, thymus, prostate, testis, ovary, small intestine and colon.

The protein resides in the cytoplasm. The catalysed reaction is a monoamide of a dicarboxylate + H2O = a dicarboxylate + NH4(+). It carries out the reaction 2-oxoglutaramate + H2O = 2-oxoglutarate + NH4(+). It catalyses the reaction 2-oxosuccinamate + H2O = oxaloacetate + NH4(+). Has omega-amidase activity. The role of omega-amidase is to remove potentially toxic intermediates by converting 2-oxoglutaramate and 2-oxosuccinamate to biologically useful 2-oxoglutarate and oxaloacetate, respectively. This Homo sapiens (Human) protein is Omega-amidase NIT2 (NIT2).